The primary structure comprises 371 residues: Protein-glutamate methylesterase/protein-glutamine glutaminase 3 (371 aa).

Residues 5–120 (RVVVIDDSAY…SEEILTIRED (116 aa)) form the Response regulatory domain. Asp-56 is modified (4-aspartylphosphate). The CheB-type methylesterase domain maps to 174 to 362 (PAGRLEVVAI…LDRMSREIIQ (189 aa)). Active-site residues include Ser-186, His-213, and Asp-309.

Belongs to the CheB family. Post-translationally, phosphorylated by CheA. Phosphorylation of the N-terminal regulatory domain activates the methylesterase activity.

The protein localises to the cytoplasm. The catalysed reaction is [protein]-L-glutamate 5-O-methyl ester + H2O = L-glutamyl-[protein] + methanol + H(+). It catalyses the reaction L-glutaminyl-[protein] + H2O = L-glutamyl-[protein] + NH4(+). In terms of biological role, involved in chemotaxis. Part of a chemotaxis signal transduction system that modulates chemotaxis in response to various stimuli. Catalyzes the demethylation of specific methylglutamate residues introduced into the chemoreceptors (methyl-accepting chemotaxis proteins or MCP) by CheR. Also mediates the irreversible deamidation of specific glutamine residues to glutamic acid. The chain is Protein-glutamate methylesterase/protein-glutamine glutaminase 3 from Geobacter sulfurreducens (strain ATCC 51573 / DSM 12127 / PCA).